We begin with the raw amino-acid sequence, 331 residues long: Fructose-1,6-bisphosphatase class 1 (331 aa).

Mg(2+)-binding residues include Glu-80, Asp-98, Leu-100, and Asp-101. Substrate is bound by residues 101 to 104 (DGSS) and Asn-189. Residue Glu-261 participates in Mg(2+) binding.

It belongs to the FBPase class 1 family. Homotetramer. Requires Mg(2+) as cofactor.

It localises to the cytoplasm. It carries out the reaction beta-D-fructose 1,6-bisphosphate + H2O = beta-D-fructose 6-phosphate + phosphate. The protein operates within carbohydrate biosynthesis; gluconeogenesis. The chain is Fructose-1,6-bisphosphatase class 1 from Rhodobacter capsulatus (strain ATCC BAA-309 / NBRC 16581 / SB1003).